The sequence spans 179 residues: Large ribosomal subunit protein uL5 (179 aa).

Belongs to the universal ribosomal protein uL5 family. In terms of assembly, part of the 50S ribosomal subunit; part of the 5S rRNA/L5/L18/L25 subcomplex. Contacts the 5S rRNA and the P site tRNA. Forms a bridge to the 30S subunit in the 70S ribosome.

Its function is as follows. This is one of the proteins that bind and probably mediate the attachment of the 5S RNA into the large ribosomal subunit, where it forms part of the central protuberance. In the 70S ribosome it contacts protein S13 of the 30S subunit (bridge B1b), connecting the 2 subunits; this bridge is implicated in subunit movement. Contacts the P site tRNA; the 5S rRNA and some of its associated proteins might help stabilize positioning of ribosome-bound tRNAs. This chain is Large ribosomal subunit protein uL5, found in Shewanella putrefaciens (strain CN-32 / ATCC BAA-453).